The sequence spans 366 residues: tRNA/tmRNA (uracil-C(5))-methyltransferase (366 aa).

Residues Gln-190, Tyr-218, Asn-223, Glu-239, and Asp-299 each contribute to the S-adenosyl-L-methionine site. The active-site Nucleophile is the Cys-324. The active-site Proton acceptor is the Glu-358.

Belongs to the class I-like SAM-binding methyltransferase superfamily. RNA M5U methyltransferase family. TrmA subfamily.

It carries out the reaction uridine(54) in tRNA + S-adenosyl-L-methionine = 5-methyluridine(54) in tRNA + S-adenosyl-L-homocysteine + H(+). It catalyses the reaction uridine(341) in tmRNA + S-adenosyl-L-methionine = 5-methyluridine(341) in tmRNA + S-adenosyl-L-homocysteine + H(+). Functionally, dual-specificity methyltransferase that catalyzes the formation of 5-methyluridine at position 54 (m5U54) in all tRNAs, and that of position 341 (m5U341) in tmRNA (transfer-mRNA). The protein is tRNA/tmRNA (uracil-C(5))-methyltransferase of Escherichia coli O6:H1 (strain CFT073 / ATCC 700928 / UPEC).